Here is a 192-residue protein sequence, read N- to C-terminus: Transcription termination/antitermination protein NusG (192 aa).

This sequence belongs to the NusG family.

Participates in transcription elongation, termination and antitermination. In Rickettsia prowazekii (strain Madrid E), this protein is Transcription termination/antitermination protein NusG.